The following is a 269-amino-acid chain: Indole-3-glycerol phosphate synthase (269 aa).

It belongs to the TrpC family.

The catalysed reaction is 1-(2-carboxyphenylamino)-1-deoxy-D-ribulose 5-phosphate + H(+) = (1S,2R)-1-C-(indol-3-yl)glycerol 3-phosphate + CO2 + H2O. It functions in the pathway amino-acid biosynthesis; L-tryptophan biosynthesis; L-tryptophan from chorismate: step 4/5. The chain is Indole-3-glycerol phosphate synthase from Roseiflexus castenholzii (strain DSM 13941 / HLO8).